Reading from the N-terminus, the 158-residue chain is Small ribosomal subunit protein uS7 (158 aa).

Belongs to the universal ribosomal protein uS7 family. In terms of assembly, part of the 30S ribosomal subunit. Contacts proteins S9 and S11.

One of the primary rRNA binding proteins, it binds directly to 16S rRNA where it nucleates assembly of the head domain of the 30S subunit. Is located at the subunit interface close to the decoding center, probably blocks exit of the E-site tRNA. This chain is Small ribosomal subunit protein uS7, found in Leptospira biflexa.